The following is a 186-amino-acid chain: Large ribosomal subunit protein uL5 (186 aa).

Belongs to the universal ribosomal protein uL5 family. Part of the 50S ribosomal subunit; part of the 5S rRNA/L5/L18/L25 subcomplex. Contacts the 5S rRNA and the P site tRNA. Forms a bridge to the 30S subunit in the 70S ribosome.

Its function is as follows. This is one of the proteins that bind and probably mediate the attachment of the 5S RNA into the large ribosomal subunit, where it forms part of the central protuberance. In the 70S ribosome it contacts protein S13 of the 30S subunit (bridge B1b), connecting the 2 subunits; this bridge is implicated in subunit movement. Contacts the P site tRNA; the 5S rRNA and some of its associated proteins might help stabilize positioning of ribosome-bound tRNAs. The sequence is that of Large ribosomal subunit protein uL5 from Cereibacter sphaeroides (strain ATCC 17029 / ATH 2.4.9) (Rhodobacter sphaeroides).